We begin with the raw amino-acid sequence, 186 residues long: Lipid A acyltransferase PagP (186 aa).

The signal sequence occupies residues 1–19 (MKRLISCLTIICALNRSAA). Catalysis depends on residues H60, D103, and S104.

It belongs to the lipid A palmitoyltransferase family. In terms of assembly, homodimer.

The protein localises to the cell outer membrane. The enzyme catalyses a lipid A + a 1,2-diacyl-sn-glycero-3-phosphocholine = a hepta-acyl lipid A + a 2-acyl-sn-glycero-3-phosphocholine. The catalysed reaction is a lipid IVA + a 1,2-diacyl-sn-glycero-3-phosphocholine = a lipid IVB + a 2-acyl-sn-glycero-3-phosphocholine. It carries out the reaction a lipid IIA + a 1,2-diacyl-sn-glycero-3-phosphocholine = a lipid IIB + a 2-acyl-sn-glycero-3-phosphocholine. Transfers a fatty acid residue from the sn-1 position of a phospholipid to the N-linked hydroxyfatty acid chain on the proximal unit of lipid A or its precursors. Confers resistance to cationic antimicrobial peptides (CAMPs). Promotes the ability of L.pneumophila to replicate and/or survive in macrophages. Important for ability to kill macrophages and to promote the virulence. This is Lipid A acyltransferase PagP from Legionella pneumophila.